A 329-amino-acid chain; its full sequence is Adenylate isopentenyltransferase (329 aa).

Residues 37 to 44 (GATGTGKS), K63, T74, 129 to 131 (SNS), 220 to 222 (KAI), and K313 contribute to the ATP site.

Belongs to the IPP transferase family. It depends on Mg(2+) as a cofactor. Expressed in roots, stems, leaves and cones.

It carries out the reaction dimethylallyl diphosphate + AMP = N(6)-(dimethylallyl)adenosine 5'-phosphate + diphosphate. The catalysed reaction is dimethylallyl diphosphate + ADP = N(6)-(dimethylallyl)adenosine 5'-diphosphate + diphosphate. It catalyses the reaction dimethylallyl diphosphate + ATP = N(6)-(dimethylallyl)adenosine 5'-triphosphate + diphosphate. Involved in cytokinin biosynthesis. Catalyzes the transfer of an isopentenyl group from dimethylallyl diphosphate (DMAPP) to ATP, ADP and AMP. GMP, IMP, CMP or UMP are not used as substrates. The polypeptide is Adenylate isopentenyltransferase (Humulus lupulus (European hop)).